Consider the following 289-residue polypeptide: Elongation factor Ts (289 aa).

The involved in Mg(2+) ion dislocation from EF-Tu stretch occupies residues 80 to 83; it reads TDFV.

Belongs to the EF-Ts family.

It localises to the cytoplasm. Functionally, associates with the EF-Tu.GDP complex and induces the exchange of GDP to GTP. It remains bound to the aminoacyl-tRNA.EF-Tu.GTP complex up to the GTP hydrolysis stage on the ribosome. In Francisella tularensis subsp. holarctica (strain LVS), this protein is Elongation factor Ts.